The chain runs to 384 residues: PqqA peptide cyclase (384 aa).

The Radical SAM core domain occupies 5–220 (VGLPLWLLAE…TNEYREKLKA (216 aa)). [4Fe-4S] cluster is bound by residues cysteine 19, cysteine 23, and cysteine 26.

The protein belongs to the radical SAM superfamily. PqqE family. Interacts with PqqD. The interaction is necessary for activity of PqqE. The cofactor is [4Fe-4S] cluster.

The enzyme catalyses [PQQ precursor protein] + S-adenosyl-L-methionine = E-Y cross-linked-[PQQ precursor protein] + 5'-deoxyadenosine + L-methionine + H(+). It participates in cofactor biosynthesis; pyrroloquinoline quinone biosynthesis. Functionally, catalyzes the cross-linking of a glutamate residue and a tyrosine residue in the PqqA protein as part of the biosynthesis of pyrroloquinoline quinone (PQQ). The polypeptide is PqqA peptide cyclase (Acinetobacter baumannii (strain SDF)).